The following is a 302-amino-acid chain: MCSDKNITATALVRPSWLRVKAPFSDEYQSTNELIKSLKLNTVCKEAACPNIGECWSKKHATVMILGSICTRACAFCNVSTGKPEQVDEYEPYRLSEAVMKLGLKHVVITSVDRDDLSDGGASHFAKCITYIRERSPTTSIEVLTPDFLRKHEAWKIVAKARPDVYNHNIETVPSLYLKVRPGARYYNSLNLLHQVKIFDSSIFTKSGIMVGLGETKHEVLQVMDDLRAAEVDFLTIGQYLRPSARHIDVGRYVTPDEFDYYAKVARSKGFLMVSASPLTRSSYHAGEHFEKLKQMRLQNII.

7 residues coordinate [4Fe-4S] cluster: Cys44, Cys49, Cys55, Cys70, Cys74, Cys77, and Ser283. The region spanning 56–272 (WSKKHATVMI…AKVARSKGFL (217 aa)) is the Radical SAM core domain.

The protein belongs to the radical SAM superfamily. Lipoyl synthase family. Requires [4Fe-4S] cluster as cofactor.

The protein localises to the cytoplasm. It catalyses the reaction [[Fe-S] cluster scaffold protein carrying a second [4Fe-4S](2+) cluster] + N(6)-octanoyl-L-lysyl-[protein] + 2 oxidized [2Fe-2S]-[ferredoxin] + 2 S-adenosyl-L-methionine + 4 H(+) = [[Fe-S] cluster scaffold protein] + N(6)-[(R)-dihydrolipoyl]-L-lysyl-[protein] + 4 Fe(3+) + 2 hydrogen sulfide + 2 5'-deoxyadenosine + 2 L-methionine + 2 reduced [2Fe-2S]-[ferredoxin]. The protein operates within protein modification; protein lipoylation via endogenous pathway; protein N(6)-(lipoyl)lysine from octanoyl-[acyl-carrier-protein]: step 2/2. Its function is as follows. Catalyzes the radical-mediated insertion of two sulfur atoms into the C-6 and C-8 positions of the octanoyl moiety bound to the lipoyl domains of lipoate-dependent enzymes, thereby converting the octanoylated domains into lipoylated derivatives. In Orientia tsutsugamushi (strain Boryong) (Rickettsia tsutsugamushi), this protein is Lipoyl synthase.